The primary structure comprises 737 residues: Polyribonucleotide nucleotidyltransferase (737 aa).

Mg(2+) is bound by residues D489 and D495. The KH domain maps to P556 to I615. Residues D625–K693 form the S1 motif domain. The tract at residues S691 to E737 is disordered. 2 stretches are compositionally biased toward basic and acidic residues: residues P700–Y715 and P725–E737.

Belongs to the polyribonucleotide nucleotidyltransferase family. Requires Mg(2+) as cofactor.

Its subcellular location is the cytoplasm. It catalyses the reaction RNA(n+1) + phosphate = RNA(n) + a ribonucleoside 5'-diphosphate. Involved in mRNA degradation. Catalyzes the phosphorolysis of single-stranded polyribonucleotides processively in the 3'- to 5'-direction. The chain is Polyribonucleotide nucleotidyltransferase from Streptococcus pneumoniae (strain Hungary19A-6).